A 95-amino-acid chain; its full sequence is Integration host factor subunit beta (95 aa).

Positions 56–76 are disordered; the sequence is RAPRTGRNPKTGTSVDLDGKY.

It belongs to the bacterial histone-like protein family. As to quaternary structure, heterodimer of an alpha and a beta chain.

This protein is one of the two subunits of integration host factor, a specific DNA-binding protein that functions in genetic recombination as well as in transcriptional and translational control. The protein is Integration host factor subunit beta of Shewanella sediminis (strain HAW-EB3).